Reading from the N-terminus, the 272-residue chain is Ribosomal RNA small subunit methyltransferase A (272 aa).

S-adenosyl-L-methionine is bound by residues Asn-16, Leu-18, Gly-43, Glu-64, Asp-89, and Asn-110.

This sequence belongs to the class I-like SAM-binding methyltransferase superfamily. rRNA adenine N(6)-methyltransferase family. RsmA subfamily.

The protein localises to the cytoplasm. It carries out the reaction adenosine(1518)/adenosine(1519) in 16S rRNA + 4 S-adenosyl-L-methionine = N(6)-dimethyladenosine(1518)/N(6)-dimethyladenosine(1519) in 16S rRNA + 4 S-adenosyl-L-homocysteine + 4 H(+). Functionally, specifically dimethylates two adjacent adenosines (A1518 and A1519) in the loop of a conserved hairpin near the 3'-end of 16S rRNA in the 30S particle. May play a critical role in biogenesis of 30S subunits. This is Ribosomal RNA small subunit methyltransferase A from Pseudomonas fluorescens (strain Pf0-1).